We begin with the raw amino-acid sequence, 154 residues long: Myoglobin (154 aa).

Residues 2-148 (GLSDGEWQSV…FRNDIAAKYK (147 aa)) enclose the Globin domain. S4 bears the Phosphoserine mark. H65 contributes to the nitrite binding site. H65 is an O2 binding site. At T68 the chain carries Phosphothreonine. H94 is a binding site for heme b.

The protein belongs to the globin family. In terms of assembly, monomeric.

The protein resides in the cytoplasm. The protein localises to the sarcoplasm. The enzyme catalyses Fe(III)-heme b-[protein] + nitric oxide + H2O = Fe(II)-heme b-[protein] + nitrite + 2 H(+). It carries out the reaction H2O2 + AH2 = A + 2 H2O. Functionally, monomeric heme protein which primary function is to store oxygen and facilitate its diffusion within muscle tissues. Reversibly binds oxygen through a pentacoordinated heme iron and enables its timely and efficient release as needed during periods of heightened demand. Depending on the oxidative conditions of tissues and cells, and in addition to its ability to bind oxygen, it also has a nitrite reductase activity whereby it regulates the production of bioactive nitric oxide. Under stress conditions, like hypoxia and anoxia, it also protects cells against reactive oxygen species thanks to its pseudoperoxidase activity. The chain is Myoglobin (MB) from Perodicticus potto edwarsi (Potto).